A 103-amino-acid chain; its full sequence is Cell division protein FtsB (103 aa).

Over 1–3 the chain is Cytoplasmic; it reads MGK. Residues 4–21 traverse the membrane as a helical segment; the sequence is LTLLLLAILVWLQYSLWF. At 22 to 103 the chain is on the periplasmic side; the sequence is GKNGIHDYSR…RAQTAGQNNR (82 aa). Residues 31–71 are a coiled coil; the sequence is RVNDDVAAQQATNAKLKARNDQLFAEIDDLNGGQEALEERA.

The protein belongs to the FtsB family. As to quaternary structure, part of a complex composed of FtsB, FtsL and FtsQ.

It localises to the cell inner membrane. Essential cell division protein. May link together the upstream cell division proteins, which are predominantly cytoplasmic, with the downstream cell division proteins, which are predominantly periplasmic. The polypeptide is Cell division protein FtsB (Escherichia fergusonii (strain ATCC 35469 / DSM 13698 / CCUG 18766 / IAM 14443 / JCM 21226 / LMG 7866 / NBRC 102419 / NCTC 12128 / CDC 0568-73)).